Consider the following 772-residue polypeptide: RNA exonuclease 5 (772 aa).

The segment covering 1-10 (MEPEREGTER) has biased composition (basic and acidic residues). A disordered region spans residues 1 to 26 (MEPEREGTERHPRKVRKRRQAPNKLV). A compositionally biased stretch (basic residues) spans 11-21 (HPRKVRKRRQA). In terms of domain architecture, Exonuclease spans 228–376 (LFGLDCEMCL…EDARIILELA (149 aa)). RRM domains lie at 505-579 (STVY…RPVT) and 600-679 (GSIY…RHLH).

The sequence is that of RNA exonuclease 5 (REXO5) from Macaca fascicularis (Crab-eating macaque).